Consider the following 375-residue polypeptide: UPF0612 protein C569.003 (375 aa).

Belongs to the UPF0612 family.

The protein resides in the cytoplasm. This Schizosaccharomyces pombe (strain 972 / ATCC 24843) (Fission yeast) protein is UPF0612 protein C569.003.